The following is a 212-amino-acid chain: Deoxyribose-phosphate aldolase (212 aa).

Aspartate 89 acts as the Proton donor/acceptor in catalysis. Catalysis depends on lysine 151, which acts as the Schiff-base intermediate with acetaldehyde. The Proton donor/acceptor role is filled by lysine 180.

The protein belongs to the DeoC/FbaB aldolase family. DeoC type 1 subfamily.

Its subcellular location is the cytoplasm. It catalyses the reaction 2-deoxy-D-ribose 5-phosphate = D-glyceraldehyde 3-phosphate + acetaldehyde. It participates in carbohydrate degradation; 2-deoxy-D-ribose 1-phosphate degradation; D-glyceraldehyde 3-phosphate and acetaldehyde from 2-deoxy-alpha-D-ribose 1-phosphate: step 2/2. Catalyzes a reversible aldol reaction between acetaldehyde and D-glyceraldehyde 3-phosphate to generate 2-deoxy-D-ribose 5-phosphate. The sequence is that of Deoxyribose-phosphate aldolase from Clostridium botulinum (strain Kyoto / Type A2).